The chain runs to 447 residues: MKAHEVNFDGLVGLTHHYAGLSFGNEASIQHRFQVSNPRLAAKQGLLKMKALADAGFPQAVIPPHERPFIPVLRQLGFSGQDEQVLEKVARQAPHWLSSVSSASPMWVANAATVCPSADALDGKVHLTVANLNNKFHRALEAPTTASLLRAIFRDAQFFAVHDALPQVALLGDEGAANHNRLGGDYGAPGIQLFVYGREEGVDTRPVRYPARQTREASEAVARLNQVNPHQVIFARQNPDVIDLGVFHNDVIAVSNRQVLFCHEQAFAKQGELMRQLRSRVAGFMPLEVPAREVSVQDAVATYLFNSQLLSRDDGSMVLVLPQECREHAGVWRYLNALLAADNPISDLRVFDLRESMANGGGPACLRLRVVLTEDELRAVNPAVMMNDTLFSTLNDWVDRYYRDRLTAADLADPQLLREGREALDTLTQLLNLGSVYPFQQEGAGNG.

Residues 19–28 (AGLSFGNEAS), Asn110, and 137–138 (HR) contribute to the substrate site. Residue Glu174 is part of the active site. A substrate-binding site is contributed by Arg212. Residue His248 is part of the active site. The substrate site is built by Asp250 and Asn359. The active-site Nucleophile is Cys365.

This sequence belongs to the succinylarginine dihydrolase family. As to quaternary structure, homodimer.

It catalyses the reaction N(2)-succinyl-L-arginine + 2 H2O + 2 H(+) = N(2)-succinyl-L-ornithine + 2 NH4(+) + CO2. The protein operates within amino-acid degradation; L-arginine degradation via AST pathway; L-glutamate and succinate from L-arginine: step 2/5. Catalyzes the hydrolysis of N(2)-succinylarginine into N(2)-succinylornithine, ammonia and CO(2). In Citrobacter koseri (strain ATCC BAA-895 / CDC 4225-83 / SGSC4696), this protein is N-succinylarginine dihydrolase.